A 445-amino-acid polypeptide reads, in one-letter code: MGRRRRRLPREPFEIAITGLSHEGRGIAHHDERTLFVHGALPGERVRAVYTKRRRSVAEARVVEVVSPAPERIAPHCPHFGVCGGCSLQHLTPERQVELKQSVLMEQFHHMGGVQPERVLAPLTGAPWGYRRKARLAVKHVPRKGGVLVGFREKHSPFVAEMDRCPVLDPRVGERLTELGRLIEGLSIPDRVPQIEVALGDETGALVFRNLAPLTAADLNRLAGFARDSGLAVYQQPGNEATMALVHDPVGRRLDYALPGHGVRLGFRPGDFTQVNAEINRAMVDQALDLLAVEPGQRVLDLFCGLGNFTLPLARRASEVVGVEGAEALVERGRENALRNGLDNVRFYGADLTLAAADQPWATGGFDRVLLDPPRSGAFEVLGLVAALGPKRIVYVSCGPATLARDAGELVHRHGYRLTAAGVMDMFPHTAHVESMAVFQREAQD.

Residues 6-64 (RRLPREPFEIAITGLSHEGRGIAHHDERTLFVHGALPGERVRAVYTKRRRSVAEARVVE) enclose the TRAM domain. [4Fe-4S] cluster is bound by residues Cys77, Cys83, Cys86, and Cys165. Residues Gln274, Phe303, Asn308, Glu324, Asp351, and Asp372 each coordinate S-adenosyl-L-methionine. The Nucleophile role is filled by Cys398.

Belongs to the class I-like SAM-binding methyltransferase superfamily. RNA M5U methyltransferase family. RlmD subfamily.

It catalyses the reaction uridine(1939) in 23S rRNA + S-adenosyl-L-methionine = 5-methyluridine(1939) in 23S rRNA + S-adenosyl-L-homocysteine + H(+). Its function is as follows. Catalyzes the formation of 5-methyl-uridine at position 1939 (m5U1939) in 23S rRNA. This Alkalilimnicola ehrlichii (strain ATCC BAA-1101 / DSM 17681 / MLHE-1) protein is 23S rRNA (uracil(1939)-C(5))-methyltransferase RlmD.